The sequence spans 76 residues: Brevinin-2ISb (76 aa).

Positions 1–22 (MFTMKKSLLVLFFLGTISLSLC) are cleaved as a signal peptide. Positions 23–41 (QEERNADEEDGGEATEEEV) are cleaved as a propeptide — removed in mature form. C70 and C76 are disulfide-bonded.

In terms of tissue distribution, expressed by the skin glands.

It is found in the secreted. Functionally, has antimicrobial activity against Gram-negative bacterium E.coli ATCC 8739 (MIC=12.5 ug), against Gram positive bacteria S.aureus ATCC 6538 (MIC=6.3 ug) and B.subtilis ATCC 6633 (MIC=25 ug). Has no activity against methicillin-resistant S.aureus ATCC 43300 (MIC= ug) and fungus C.albicans ATCC 90028. The polypeptide is Brevinin-2ISb (Odorrana ishikawae (Ishikawa's frog)).